A 256-amino-acid chain; its full sequence is Imidazole glycerol phosphate synthase subunit HisF (256 aa).

Residues aspartate 12 and aspartate 131 contribute to the active site.

It belongs to the HisA/HisF family. As to quaternary structure, heterodimer of HisH and HisF.

It is found in the cytoplasm. The catalysed reaction is 5-[(5-phospho-1-deoxy-D-ribulos-1-ylimino)methylamino]-1-(5-phospho-beta-D-ribosyl)imidazole-4-carboxamide + L-glutamine = D-erythro-1-(imidazol-4-yl)glycerol 3-phosphate + 5-amino-1-(5-phospho-beta-D-ribosyl)imidazole-4-carboxamide + L-glutamate + H(+). It participates in amino-acid biosynthesis; L-histidine biosynthesis; L-histidine from 5-phospho-alpha-D-ribose 1-diphosphate: step 5/9. Functionally, IGPS catalyzes the conversion of PRFAR and glutamine to IGP, AICAR and glutamate. The HisF subunit catalyzes the cyclization activity that produces IGP and AICAR from PRFAR using the ammonia provided by the HisH subunit. In Pseudomonas entomophila (strain L48), this protein is Imidazole glycerol phosphate synthase subunit HisF.